The primary structure comprises 465 residues: Uronate isomerase (465 aa).

It belongs to the metallo-dependent hydrolases superfamily. Uronate isomerase family.

It catalyses the reaction D-glucuronate = D-fructuronate. The catalysed reaction is aldehydo-D-galacturonate = keto-D-tagaturonate. The protein operates within carbohydrate metabolism; pentose and glucuronate interconversion. The chain is Uronate isomerase from Streptococcus equi subsp. zooepidemicus (strain H70).